We begin with the raw amino-acid sequence, 376 residues long: Protein-tyrosine sulfotransferase 2 (376 aa).

Topologically, residues 1-8 (MRLSVRKV) are cytoplasmic. The chain crosses the membrane as a helical; Signal-anchor for type II membrane protein span at residues 9-25 (LLAAGCALALVLAVQLG). Over 26–376 (QQVLECRAVL…NSTSPHLGSS (351 aa)) the chain is Lumenal. Residue 77–81 (RSGTT) participates in 3'-phosphoadenylyl sulfate binding. Cys95 and Cys155 form a disulfide bridge. Glu98 (proton donor/acceptor) is an active-site residue. Residues 100–104 (RIIPR) are interaction with peptide substrate. 3'-phosphoadenylyl sulfate-binding residues include Arg182, Ser190, and Arg194. Cys224 and Cys232 form a disulfide bridge. 3'-phosphoadenylyl sulfate contacts are provided by residues Tyr237, 284-293 (STDQVIKPVN), and Lys299. Residues Asn342 and Asn367 are each glycosylated (N-linked (GlcNAc...) asparagine).

Belongs to the protein sulfotransferase family. As to quaternary structure, homodimer. Can also form heterodimers with TPST1. In terms of processing, N-glycosylated. As to expression, widely expressed.

Its subcellular location is the golgi apparatus membrane. The enzyme catalyses L-tyrosyl-[protein] + 3'-phosphoadenylyl sulfate = O-sulfo-L-tyrosine-[protein] + adenosine 3',5'-bisphosphate + H(+). Its function is as follows. Catalyzes the O-sulfation of tyrosine residues within acidic motifs of polypeptides, using 3'-phosphoadenylyl sulfate (PAPS) as cosubstrate. The sequence is that of Protein-tyrosine sulfotransferase 2 (Tpst2) from Mus musculus (Mouse).